The chain runs to 265 residues: Shikimate dehydrogenase (NADP(+)) (265 aa).

Residues 15-17 and Thr62 each bind shikimate; that span reads SLS. The Proton acceptor role is filled by Lys66. Residue Glu78 coordinates NADP(+). Asn87 and Asp102 together coordinate shikimate. NADP(+)-binding positions include 126–130, 150–155, and Val210; these read GAGGV and NRTELK. Position 212 (Tyr212) interacts with shikimate. Gly233 serves as a coordination point for NADP(+).

The protein belongs to the shikimate dehydrogenase family. Homodimer.

The enzyme catalyses shikimate + NADP(+) = 3-dehydroshikimate + NADPH + H(+). The protein operates within metabolic intermediate biosynthesis; chorismate biosynthesis; chorismate from D-erythrose 4-phosphate and phosphoenolpyruvate: step 4/7. In terms of biological role, involved in the biosynthesis of the chorismate, which leads to the biosynthesis of aromatic amino acids. Catalyzes the reversible NADPH linked reduction of 3-dehydroshikimate (DHSA) to yield shikimate (SA). The chain is Shikimate dehydrogenase (NADP(+)) from Pelagibacter ubique (strain HTCC1062).